We begin with the raw amino-acid sequence, 284 residues long: Peflin (284 aa).

The disordered stretch occupies residues M1–A111. Low complexity predominate over residues Q8–Y26. 9 consecutive repeat copies span residues P21–P29, N31–G39, P41–P49, A50–P58, A59–P67, T76–A84, A85–Q92, P93–A100, and Q101–G109. The 9 X 9 AA approximate tandem repeat of [AP]-P-G-G-P-Y-G-G-P-P stretch occupies residues P21–G109. The span at G34–A50 shows a compositional bias: gly residues. Positions G65 to G75 are enriched in low complexity. Residues T76 to Y90 show a composition bias toward gly residues. EF-hand domains follow at residues N114–S149, T155–I183, K181–N216, L217–L253, and T254–M283. 4 residues coordinate Ca(2+): D127, D129, S131, and Y133. Residue K137 forms a Glycyl lysine isopeptide (Lys-Gly) (interchain with G-Cter in ubiquitin) linkage. E138 is a binding site for Ca(2+). Residues D194, D196, S198, S200, and E205 each coordinate Ca(2+). A required for interaction with PDCD6 region spans residues T204–L284.

As to quaternary structure, heterodimer; heterodimerizes (via the EF-hand 5) with PDCD6. Dissociates from PDCD6 in presence of calcium. Ubiquitinated by the BCR(KLHL12) E3 ubiquitin ligase complex.

It localises to the cytoplasm. The protein localises to the endoplasmic reticulum. It is found in the membrane. The protein resides in the cytoplasmic vesicle. Its subcellular location is the COPII-coated vesicle membrane. In terms of biological role, calcium-binding protein that acts as an adapter that bridges unrelated proteins or stabilizes weak protein-protein complexes in response to calcium. Together with PDCD6, acts as a calcium-dependent adapter for the BCR(KLHL12) complex, a complex involved in endoplasmic reticulum (ER)-Golgi transport by regulating the size of COPII coats. In response to cytosolic calcium increase, the heterodimer formed with PDCD6 interacts with, and bridges together the BCR(KLHL12) complex and SEC31 (SEC31A or SEC31B), promoting monoubiquitination of SEC31 and subsequent collagen export, which is required for neural crest specification. Its role in the heterodimer formed with PDCD6 is however unclear: some evidence shows that PEF1 and PDCD6 work together and promote association between PDCD6 and SEC31 in presence of calcium. Other reports show that PEF1 dissociates from PDCD6 in presence of calcium, and may act as a negative regulator of PDCD6. Also acts as a negative regulator of ER-Golgi transport; possibly by inhibiting interaction between PDCD6 and SEC31. In Homo sapiens (Human), this protein is Peflin.